The chain runs to 164 residues: 2-C-methyl-D-erythritol 2,4-cyclodiphosphate synthase (164 aa).

Residues Asp-8 and His-10 each coordinate a divalent metal cation. 4-CDP-2-C-methyl-D-erythritol 2-phosphate-binding positions include 8 to 10 (DVH) and 34 to 35 (HS). A divalent metal cation is bound at residue His-42. 4-CDP-2-C-methyl-D-erythritol 2-phosphate-binding positions include 56–58 (DIG), 132–135 (TTEE), Phe-139, and Lys-142.

The protein belongs to the IspF family. In terms of assembly, homotrimer. Requires a divalent metal cation as cofactor.

It catalyses the reaction 4-CDP-2-C-methyl-D-erythritol 2-phosphate = 2-C-methyl-D-erythritol 2,4-cyclic diphosphate + CMP. It functions in the pathway isoprenoid biosynthesis; isopentenyl diphosphate biosynthesis via DXP pathway; isopentenyl diphosphate from 1-deoxy-D-xylulose 5-phosphate: step 4/6. Its function is as follows. Involved in the biosynthesis of isopentenyl diphosphate (IPP) and dimethylallyl diphosphate (DMAPP), two major building blocks of isoprenoid compounds. Catalyzes the conversion of 4-diphosphocytidyl-2-C-methyl-D-erythritol 2-phosphate (CDP-ME2P) to 2-C-methyl-D-erythritol 2,4-cyclodiphosphate (ME-CPP) with a corresponding release of cytidine 5-monophosphate (CMP). This is 2-C-methyl-D-erythritol 2,4-cyclodiphosphate synthase from Clostridium kluyveri (strain NBRC 12016).